Reading from the N-terminus, the 489-residue chain is MKTNQQPKAVIVIFGATGDLAKRKLYPSIHRLYQNGQIGEEFAVVGVGRRPWSNEDLRQTVKTSISSSADKHIDDFTSHFYYHPFDVTNPGSYQELNVLLNQLEDTYQIPNNRMFYLAMAPEFFGTIAKTLKSEGVTATTGWSRLVIEKPFGHDLPSAQALNKEIREAFTEDQIYRIDHYLGKQMVQNIEVIRFANAIFEPLWTNRYISNIQITSSESLGVEDRARYYEKSGALRDMVQNHIMQMVALLAMEPPIKLNTEEIRSEKVKVLRALRPIAKDEVDEYFVRGQYHAGEIDGVPVPAYTDEDNVAPDSNTETFVAGKLLIDNFRWAGVPFYIRTGKRMKEKSTKIVVQFKDIPMNLYYGNENNMNPNLLVIHIQPDEGITLYLNAKKLGGAAHAQPIKLDYCSNCNDELNTPEAYEKLIHDCLLGDATNFAHWDEVALSWSFVDSISETWAANKTLSPNYESGSMGPKESDDLLVKDGLHWWNI.

NADP(+)-binding positions include 15-22 (GATGDLAK), Arg49, 86-87 (DV), and Lys149. Substrate contacts are provided by His179, Lys183, Glu217, and Asp236. His241 serves as the catalytic Proton acceptor. Substrate is bound by residues Lys341 and Lys346.

It belongs to the glucose-6-phosphate dehydrogenase family.

The catalysed reaction is D-glucose 6-phosphate + NADP(+) = 6-phospho-D-glucono-1,5-lactone + NADPH + H(+). The protein operates within carbohydrate degradation; pentose phosphate pathway; D-ribulose 5-phosphate from D-glucose 6-phosphate (oxidative stage): step 1/3. Functionally, catalyzes the oxidation of glucose 6-phosphate to 6-phosphogluconolactone. The polypeptide is Glucose-6-phosphate 1-dehydrogenase (Bacillus subtilis (strain 168)).